A 192-amino-acid polypeptide reads, in one-letter code: Leucine-rich repeat-containing protein 51 (192 aa).

LRR repeat units follow at residues 49–71 (SLTQSLWLNNNVLNDLRDFNQVA), 80–101 (NLAWIDLSFNDLTSIDPVLTTF), and 103–124 (NLSVLYLHGNSIQHLGEVNKLA). The LRRCT domain occupies 137–175 (NPMEEEKGYRQYVLCTLPHITTFDFSGVTKADRTTAEVW).

It is found in the cytoplasm. This is Leucine-rich repeat-containing protein 51 from Macaca mulatta (Rhesus macaque).